The chain runs to 365 residues: 5-hydroxytryptamine receptor 1E (365 aa).

The Extracellular segment spans residues 1–22 (MNITNCTTDASMVVRPKTVTEK). 2 N-linked (GlcNAc...) asparagine glycosylation sites follow: N2 and N5. The helical transmembrane segment at 23–47 (MLICMTLVIITTLTMLLNSAVIMAI) threads the bilayer. Residues 48–59 (CTTKKLHQPANY) lie on the Cytoplasmic side of the membrane. Residues 60-82 (LICSLAVTDLLVAVLVMPLSIMY) form a helical membrane-spanning segment. At 83–96 (IVMDSWRLGYFICE) the chain is on the extracellular side. Cysteines 95 and 173 form a disulfide. Residues 97 to 118 (VWLSVDMTCCTCSILHLCVIAL) form a helical membrane-spanning segment. Residues D102 and T107 each coordinate ergotamine. Residues 119-121 (DRY) carry the DRY motif; important for ligand-induced conformation changes motif. Residues 119 to 138 (DRYWAITNAIEYARKRTAKR) are Cytoplasmic-facing. The helical transmembrane segment at 139 to 160 (AGLMILTVWTISIFISMPPLFW) threads the bilayer. Topologically, residues 161-179 (RSHRQLSPPPSQCTIQHDH) are extracellular. I175 contributes to the ergotamine binding site. The helical transmembrane segment at 180-202 (VIYTIYSTFGAFYIPLTLILILY) threads the bilayer. Residues 203–291 (YRIYHAAKSL…SSTRERKAAR (89 aa)) lie on the Cytoplasmic side of the membrane. A helical membrane pass occupies residues 292–314 (ILGLILGAFILSWLPFFIKELIV). Residues 315–324 (GLSIYTVSSE) are Extracellular-facing. Residues 325–347 (VGDFLTWLGYVNSLINPLLYTSF) form a helical membrane-spanning segment. An NPxxY motif; important for ligand-induced conformation changes and signaling motif is present at residues 340 to 344 (NPLLY). Over 348 to 365 (NEDFKLAFKKLIRCREHT) the chain is Cytoplasmic.

It belongs to the G-protein coupled receptor 1 family. In terms of tissue distribution, detected in the brain with the greatest abundance in the hippocampus, followed by the olfactory bulb. Lower levels are detected in the cortex, thalamus, pons, hypothalamus, midbrain, striatum, and cerebellum.

It is found in the cell membrane. G-protein coupled receptor for 5-hydroxytryptamine (serotonin). Also functions as a receptor for various alkaloids and psychoactive substances. Ligand binding causes a conformation change that triggers signaling via guanine nucleotide-binding proteins (G proteins) and modulates the activity of down-stream effectors, such as adenylate cyclase. Signaling inhibits adenylate cyclase activity. The polypeptide is 5-hydroxytryptamine receptor 1E (5HT1E) (Cavia porcellus (Guinea pig)).